The chain runs to 239 residues: ATP synthase subunit a (239 aa).

Transmembrane regions (helical) follow at residues 17–37 (GTVCMMVLLTCLIVFFLVYFF), 75–95 (FHLLAFTLFLFVFVANNIGLI), 113–133 (DPFVTLTLAFIMITLTHLFGV), 182–202 (LLTLIANMMNNLGWFSLPLAI), and 206–226 (MVWIAFSLFIGSIQAFVFVTL).

The protein belongs to the ATPase A chain family. As to quaternary structure, F-type ATPases have 2 components, CF(1) - the catalytic core - and CF(0) - the membrane proton channel. CF(1) has five subunits: alpha(3), beta(3), gamma(1), delta(1), epsilon(1). CF(0) has three main subunits: a(1), b(2) and c(9-12). The alpha and beta chains form an alternating ring which encloses part of the gamma chain. CF(1) is attached to CF(0) by a central stalk formed by the gamma and epsilon chains, while a peripheral stalk is formed by the delta and b chains.

It localises to the cell membrane. Key component of the proton channel; it plays a direct role in the translocation of protons across the membrane. This Enterococcus hirae (strain ATCC 9790 / DSM 20160 / JCM 8729 / LMG 6399 / NBRC 3181 / NCIMB 6459 / NCDO 1258 / NCTC 12367 / WDCM 00089 / R) protein is ATP synthase subunit a.